The sequence spans 541 residues: CRISPR-associated exonuclease Cas4/endonuclease Cas1 fusion (541 aa).

The tract at residues Met-1–Pro-179 is CRISPR-associated exonuclease Cas4. Residue Cys-9 participates in [4Fe-4S] cluster binding. Residues Asp-65 and Glu-78 each contribute to the Mn(2+) site. Cys-168, Cys-171, and Cys-177 together coordinate [4Fe-4S] cluster. The CRISPR-associated endonuclease Cas1 stretch occupies residues Thr-204–Arg-541. Residues Glu-365, His-433, and Glu-448 each contribute to the Mn(2+) site.

This sequence in the N-terminal section; belongs to the CRISPR-associated exonuclease Cas4 family. In the C-terminal section; belongs to the CRISPR-associated endonuclease Cas1 family. In terms of assembly, homodimer, forms a heterotetramer with a Cas2 homodimer. It depends on [4Fe-4S] cluster as a cofactor. Requires Mg(2+) as cofactor. Mn(2+) serves as cofactor.

The catalysed reaction is exonucleolytic cleavage in the 5'- to 3'-direction to yield nucleoside 3'-phosphates.. Its function is as follows. CRISPR (clustered regularly interspaced short palindromic repeat), is an adaptive immune system that provides protection against mobile genetic elements (viruses, transposable elements and conjugative plasmids). CRISPR clusters contain spacers, sequences complementary to antecedent mobile elements, and target invading nucleic acids. CRISPR clusters are transcribed and processed into CRISPR RNA (crRNA). The Cas4 region acts as a ssDNA exonuclease, while the Cas1 region acts as a dsDNA endonuclease. Involved in the integration of spacer DNA into the CRISPR cassette. The chain is CRISPR-associated exonuclease Cas4/endonuclease Cas1 fusion (cas4-cas1) from Leptospira interrogans serogroup Icterohaemorrhagiae serovar Lai (strain 56601).